The chain runs to 596 residues: Uptake hydrogenase large subunit (596 aa).

Cys75, Cys78, Cys575, and Cys578 together coordinate Ni(2+).

It belongs to the [NiFe]/[NiFeSe] hydrogenase large subunit family. Heterodimer of a large and a small subunit. Ni(2+) serves as cofactor.

It localises to the cell membrane. The catalysed reaction is H2 + A = AH2. In terms of biological role, this enzyme recycles the H(2) produced by nitrogenase to increase the production of ATP and to protect nitrogenase against inhibition or damage by O(2) under carbon- or phosphate-limited conditions. This chain is Uptake hydrogenase large subunit (hupB), found in Bradyrhizobium diazoefficiens (strain JCM 10833 / BCRC 13528 / IAM 13628 / NBRC 14792 / USDA 110).